A 332-amino-acid polypeptide reads, in one-letter code: Phosphate acyltransferase (332 aa).

Belongs to the PlsX family. As to quaternary structure, homodimer. Probably interacts with PlsY.

It is found in the cytoplasm. It catalyses the reaction a fatty acyl-[ACP] + phosphate = an acyl phosphate + holo-[ACP]. It participates in lipid metabolism; phospholipid metabolism. In terms of biological role, catalyzes the reversible formation of acyl-phosphate (acyl-PO(4)) from acyl-[acyl-carrier-protein] (acyl-ACP). This enzyme utilizes acyl-ACP as fatty acyl donor, but not acyl-CoA. This chain is Phosphate acyltransferase, found in Nitratiruptor sp. (strain SB155-2).